Here is a 171-residue protein sequence, read N- to C-terminus: uncharacterized protein (171 aa).

This is an uncharacterized protein from Saccharomyces cerevisiae (strain ATCC 204508 / S288c) (Baker's yeast).